The sequence spans 153 residues: Insulin-like growth factor 1 (153 aa).

The segment at 49–77 is b; it reads GPETLCGAELVDALQFVCGDRGFYFNKPT. 3 disulfide bridges follow: cysteine 54–cysteine 96, cysteine 66–cysteine 109, and cysteine 95–cysteine 100. The interval 78–89 is c; it reads GYGSSSRRAPQT. An a region spans residues 90–110; the sequence is GIVDECCFRSCDLRRLEMYCA. The segment at 111–118 is d; that stretch reads PLKPAKSA. The propeptide at 119 to 153 is e peptide; the sequence is RSVRAQRHTDMPKAQKEVHLKNASRGSAGNKNYRM. Positions 120–153 are disordered; the sequence is SVRAQRHTDMPKAQKEVHLKNASRGSAGNKNYRM. Residues 125–138 show a composition bias toward basic and acidic residues; the sequence is RHTDMPKAQKEVHL. Positions 142 to 153 are enriched in polar residues; the sequence is SRGSAGNKNYRM.

This sequence belongs to the insulin family. Forms a ternary complex with IGFR1 and ITGAV:ITGB3. Forms a ternary complex with IGFR1 and ITGA6:ITGB4. Forms a ternary complex with IGFBP3 and ALS.

It localises to the secreted. The insulin-like growth factors, isolated from plasma, are structurally and functionally related to insulin but have a much higher growth-promoting activity. May be a physiological regulator of [1-14C]-2-deoxy-D-glucose (2DG) transport and glycogen synthesis in osteoblasts. Stimulates glucose transport in bone-derived osteoblastic (PyMS) cells and is effective at much lower concentrations than insulin, not only regarding glycogen and DNA synthesis but also with regard to enhancing glucose uptake. May play a role in synapse maturation. Ca(2+)-dependent exocytosis of IGF1 is required for sensory perception of smell in the olfactory bulb. Acts as a ligand for IGF1R. Binds to the alpha subunit of IGF1R, leading to the activation of the intrinsic tyrosine kinase activity which autophosphorylates tyrosine residues in the beta subunit thus initiating a cascade of down-stream signaling events leading to activation of the PI3K-AKT/PKB and the Ras-MAPK pathways. Binds to integrins ITGAV:ITGB3 and ITGA6:ITGB4. Its binding to integrins and subsequent ternary complex formation with integrins and IGFR1 are essential for IGF1 signaling. Induces the phosphorylation and activation of IGFR1, MAPK3/ERK1, MAPK1/ERK2 and AKT1. As part of the MAPK/ERK signaling pathway, acts as a negative regulator of apoptosis in cardiomyocytes via promotion of STUB1/CHIP-mediated ubiquitination and degradation of ICER-type isoforms of CREM. In Canis lupus familiaris (Dog), this protein is Insulin-like growth factor 1.